The following is a 952-amino-acid chain: Leucine--tRNA ligase (952 aa).

The 'HIGH' region signature appears at 66–77; the sequence is PYPSGAGLHVGH. Positions 722–726 match the 'KMSKS' region motif; that stretch reads KMGKS. Position 725 (K725) interacts with ATP.

This sequence belongs to the class-I aminoacyl-tRNA synthetase family.

Its subcellular location is the cytoplasm. The enzyme catalyses tRNA(Leu) + L-leucine + ATP = L-leucyl-tRNA(Leu) + AMP + diphosphate. In Corynebacterium glutamicum (strain ATCC 13032 / DSM 20300 / JCM 1318 / BCRC 11384 / CCUG 27702 / LMG 3730 / NBRC 12168 / NCIMB 10025 / NRRL B-2784 / 534), this protein is Leucine--tRNA ligase.